Here is a 513-residue protein sequence, read N- to C-terminus: Light-independent protochlorophyllide reductase subunit B (513 aa).

Asp-36 is a [4Fe-4S] cluster binding site. Catalysis depends on Asp-299, which acts as the Proton donor. 434 to 435 lines the substrate pocket; it reads GM.

The protein belongs to the ChlB/BchB/BchZ family. In terms of assembly, protochlorophyllide reductase is composed of three subunits; ChlL, ChlN and ChlB. Forms a heterotetramer of two ChlB and two ChlN subunits. [4Fe-4S] cluster serves as cofactor.

It localises to the plastid. The protein localises to the chloroplast. It catalyses the reaction chlorophyllide a + oxidized 2[4Fe-4S]-[ferredoxin] + 2 ADP + 2 phosphate = protochlorophyllide a + reduced 2[4Fe-4S]-[ferredoxin] + 2 ATP + 2 H2O. Its pathway is porphyrin-containing compound metabolism; chlorophyll biosynthesis (light-independent). Functionally, component of the dark-operative protochlorophyllide reductase (DPOR) that uses Mg-ATP and reduced ferredoxin to reduce ring D of protochlorophyllide (Pchlide) to form chlorophyllide a (Chlide). This reaction is light-independent. The NB-protein (ChlN-ChlB) is the catalytic component of the complex. The polypeptide is Light-independent protochlorophyllide reductase subunit B (Staurastrum punctulatum (Green alga)).